A 414-amino-acid polypeptide reads, in one-letter code: Cyclin-B1-3 (414 aa).

The protein belongs to the cyclin family. Cyclin AB subfamily. Expressed in roots, stems and flowers.

The protein is Cyclin-B1-3 (CYCB1-3) of Arabidopsis thaliana (Mouse-ear cress).